A 533-amino-acid polypeptide reads, in one-letter code: MMNACTKFSDNYDVKEELGKGAFSVVRRCVHKTTGLEFAAKIINTKKLSARDFQKLEREARICRKLQHPNIVRLHDSIQEESFHYLVFDLVTGGELFEDIVAREFYSEADASHCIQQILESIAYCHSNGVVHRDLKPENLLLASKAKGAAVKLADFGLAIEVNDSEAWHGFAGTPGYLSPEVLKKDPYSKPVDIWACGVILYILLVGYPPFWDEDQHRLYAQIKAGAYDYPSPEWDTVTPEAKSLIDSMLTVNPKKRITADQALKVPWICNRERVASAIHRQDTVDCLKKFNARRKLKAAISAVKMVTRMSGVLRTSDSTGSVASNGSTTHDTSQIAGTSSQPTSPAAEGAILTTMIATRNLSNLGRNLLNKKEQGPPSTIKESSESSQTIDDNDSEKAQKQDIVRVTQTLLDAISCKDFDTYTRLCDTSMTCFEPEALGNLIEGIEFHRFYFDGNRKNQVHTTMLNPNVHIIGEDAACVAYVKLTQFLDRNGEAHTRQSQESRVWSKKQGRWLCVHVHRSTQPSTNTTVSEF.

Residues 18 to 26 (LGKGAFSVV) and K41 each bind ATP. The active-site Proton acceptor is D134. T284 is modified (phosphothreonine; by autocatalysis). Composition is skewed to polar residues over residues 316–345 (TSDS…QPTS) and 377–391 (PPST…SQTI). Disordered regions lie at residues 316–347 (TSDS…TSPA) and 369–400 (LLNK…EKAQ).

Belongs to the protein kinase superfamily. CAMK Ser/Thr protein kinase family. CaMK subfamily. In terms of assembly, dodecamer. Subunits are tightly packed around a central ring-shaped scaffold with extensive contacts between the regulatory segment of one kinase and the catalytic domain of another enabling cooperative activation of a subunit by the adjacent molecule. Interacts with and phosphorylates daf-16; the interaction promotes daf-16 nuclear localization. Interacts with egl-2 and tir-1. Interacts with nsy-1. Mg(2+) serves as cofactor.

The protein localises to the cytoplasm. Its subcellular location is the cell projection. It is found in the axon. It localises to the perikaryon. It catalyses the reaction L-seryl-[protein] + ATP = O-phospho-L-seryl-[protein] + ADP + H(+). The enzyme catalyses L-threonyl-[protein] + ATP = O-phospho-L-threonyl-[protein] + ADP + H(+). Its activity is regulated as follows. Ca(2+)/calmodulin binding removes an autoinhibitory regulatory segment located C-terminal to the kinase domain. This releases the catalytic activity of the enzyme and makes accessible a regulatory residue Thr-284. Phosphorylation of Thr-284 by another kinase domain within the oligomeric holoenzyme keeps CaMKII active in the absence of Ca(2+)/calmodulin by preventing the rebinding of the regulatory segment to the kinase domain and by increasing the affinity of calmodulin for the enzyme. Can respond to high-frequency Ca(2+) pulses to become Ca(2+) independent. Its function is as follows. Role in locomotion and neuronal cell fate specification. Required for the regulation of synaptic density, egg laying, defecation, and meiotic maturation. Required for viability under chronic osmotic stress in which it acts downstream of osr-1. Regulates the synaptic trafficking of glr-1. Bidirectional modulator of neurotransmitter release with negative modulatory effects mainly mediated via slo-1 activation. May suppress the functional response to an internal pacemaker, perhaps by modulating the activity of the IP3 receptor. The sequence is that of Calcium/calmodulin-dependent protein kinase type II from Caenorhabditis briggsae.